The sequence spans 439 residues: Xylose isomerase (439 aa).

Catalysis depends on residues H103 and D106. Mg(2+) contacts are provided by E234, E270, H273, D298, D309, D311, and D341.

It belongs to the xylose isomerase family. As to quaternary structure, homotetramer. The cofactor is Mg(2+).

Its subcellular location is the cytoplasm. The catalysed reaction is alpha-D-xylose = alpha-D-xylulofuranose. The chain is Xylose isomerase from Bacteroides fragilis (strain ATCC 25285 / DSM 2151 / CCUG 4856 / JCM 11019 / LMG 10263 / NCTC 9343 / Onslow / VPI 2553 / EN-2).